A 184-amino-acid chain; its full sequence is UPF0301 protein Rsph17029_2659 (184 aa).

The protein belongs to the UPF0301 (AlgH) family.

The sequence is that of UPF0301 protein Rsph17029_2659 from Cereibacter sphaeroides (strain ATCC 17029 / ATH 2.4.9) (Rhodobacter sphaeroides).